Here is a 238-residue protein sequence, read N- to C-terminus: Flagellar L-ring protein (238 aa).

A signal peptide spans 1 to 16 (MRKLILISLCIFFLAS). Residue Cys17 is the site of N-palmitoyl cysteine attachment. Cys17 carries S-diacylglycerol cysteine lipidation.

It belongs to the FlgH family. In terms of assembly, the basal body constitutes a major portion of the flagellar organelle and consists of four rings (L,P,S, and M) mounted on a central rod.

The protein localises to the cell outer membrane. Its subcellular location is the bacterial flagellum basal body. Its function is as follows. Assembles around the rod to form the L-ring and probably protects the motor/basal body from shearing forces during rotation. This is Flagellar L-ring protein from Thermodesulfovibrio yellowstonii (strain ATCC 51303 / DSM 11347 / YP87).